Here is a 345-residue protein sequence, read N- to C-terminus: Calcium/calmodulin-dependent protein kinase type 1 (345 aa).

Residues 1-23 (MPLFGSKKETAKKSSKKDKDEGK) are disordered. Positions 31–287 (YILKDLLGTG…CKQALGHPWI (257 aa)) constitute a Protein kinase domain. ATP contacts are provided by residues 37–45 (LGTGAFSQV) and K61. D153 acts as the Proton acceptor in catalysis. Positions 287–327 (ISGNAASTENIHSSVSEQLKKNFAKSRWRQAYHATAVIRQM) are autoinhibitory domain. Residues 307 to 328 (KNFAKSRWRQAYHATAVIRQMR) are calmodulin-binding.

The protein belongs to the protein kinase superfamily. CAMK Ser/Thr protein kinase family. CaMK subfamily. Highly expressed in hepatopancreas and to a lesser extent in gills. Low expression in hemocytes, testis, ovary, heart, eyestalk, muscle and epidermis.

The catalysed reaction is L-seryl-[protein] + ATP = O-phospho-L-seryl-[protein] + ADP + H(+). It carries out the reaction L-threonyl-[protein] + ATP = O-phospho-L-threonyl-[protein] + ADP + H(+). Activated by Ca(2+)/calmodulin. Binding of calmodulin results in conformational change that relieves intrasteric autoinhibition. Calcium/calmodulin-dependent protein kinase that operates in the calcium-triggered CaMKK-CaMK1 signaling cascade and, upon calcium influx, regulates transcription activators activity, cell cycle, hormone production, cell differentiation, actin filament organization and neurite outgrowth. Involved in molting. The sequence is that of Calcium/calmodulin-dependent protein kinase type 1 from Macrobrachium nipponense (Oriental river shrimp).